The sequence spans 835 residues: Leucine--tRNA ligase (835 aa).

The 'HIGH' region motif lies at 44–54 (PYPSGNIHMGH). The short motif at 587-591 (KMSKS) is the 'KMSKS' region element. Residue lysine 590 coordinates ATP.

Belongs to the class-I aminoacyl-tRNA synthetase family.

It localises to the cytoplasm. It carries out the reaction tRNA(Leu) + L-leucine + ATP = L-leucyl-tRNA(Leu) + AMP + diphosphate. The polypeptide is Leucine--tRNA ligase (Lawsonia intracellularis (strain PHE/MN1-00)).